The chain runs to 59 residues: Large ribosomal subunit protein bL32 (59 aa).

Positions 1 to 20 are disordered; the sequence is MAVQQNKKSKSKKGMRRSHD. A compositionally biased stretch (basic residues) spans 7 to 19; it reads KKSKSKKGMRRSH.

This sequence belongs to the bacterial ribosomal protein bL32 family.

This is Large ribosomal subunit protein bL32 from Nitratidesulfovibrio vulgaris (strain DSM 19637 / Miyazaki F) (Desulfovibrio vulgaris).